The chain runs to 1039 residues: MDKGRAAKVCHHADCQQLHHRGPLNLCEICDSKFHNTTHYDGHVRFDLPPQGSVLARNVSTRSCPPRTSPAGDLEEEDEGYTNGKGDRKSAGLKISKKKARRRHTDDPSKECFTLKFDLNVDIETEIVPAMKKKSLGEVLLPVFERKGIALGKVDIYLDQSNTPLSLTFEAYRFGGHYLRVKAKPGDEGKVEQGVKDSKSLSLPALRPSGAGTPVLERVDPQSRRESSLDILAPGRRRKNMSEFLGDTSIPGQESPAPSSCSLPVGSSVGSSGSSESWKNRAASRFSGFFSSSPSTGAFGREVDKMEQLESKLHAYSLFGLPRMPRRLRFDHDSWEEEEDDEEEEDNSGLRLEDSWRELIDGHEKLTRRQCHQQEAVWELLHTEVSYIRKLRVITNLFLCCLLNLQESGLLCEVEAERLFSNIPELARLHRGLWSSVMVPVLEKARRTRALLQPSDFLKGFKMFGSLFKPYIRYCMEEEGCMEYMRSLLRDNDLFRAYVTWAEKHQQCQRLKLSDMLAKPHQRLTKYPLLLKSVLRKTDEPRAKEAIITMISSVERFIHHVNTCMRQRQERQRLAGVVSRIDAYEVVEGSNDEVDKFLKEFLHLDLTAPMPGTSPEETRQLLLEGSLRMKEGKDSKMDVYCFLFTDLLLVTKAVKKAERTKVIRPPLLVDKIVCRELRDPGSFLLIHLNEFHSAVGAYTFQASSQALCRSWVDTLYNAQNQLQQLRAQLLCAQEHPGTQHLQSLEEEEDEQEEEGEESGTSAASSPTILRKSSNSLDSEHCASDGSTETLAMVVVEPGETLSSPEFDRGPFSSQSDEASLSNTTSSITPTSELLPLGPVDGRSCSMDSAYGTLSPTSLQDFAAPHPVVEPVPVPQTLSPQPSPRLRRRTPVQLLPRLPHLLKSKSEASLLQLLSGTTTSVSPPAPSRSLSELCLITMAPGVRTQSSLQEGGPGWNCPGACGPCQGPPLSESENRPSHKAGGPADSARRKCREMPCGTVPRVQPEPSPGISAQHRKLTLAQLYRIRTTLLLNSTLTASEV.

2 disordered regions span residues 58–105 (NVST…RRHT) and 185–277 (PGDE…SSES). Composition is skewed to basic and acidic residues over residues 185 to 199 (PGDEGKVEQGVKDSK) and 217 to 228 (ERVDPQSRRESS). Over residues 259 to 277 (SSCSLPVGSSVGSSGSSES) the composition is skewed to low complexity. A DH domain is found at 372-564 (HQQEAVWELL…ERFIHHVNTC (193 aa)). The PH domain occupies 620–720 (QLLLEGSLRM…WVDTLYNAQN (101 aa)). 2 disordered regions span residues 739–785 (QHLQ…ASDG) and 800–836 (TLSSPEFDRGPFSSQSDEASLSNTTSSITPTSELLPL). Residues 744–757 (LEEEEDEQEEEGEE) show a composition bias toward acidic residues. Composition is skewed to polar residues over residues 758–776 (SGTSAASSPTILRKSSNSL) and 811–831 (FSSQSDEASLSNTTSSITPTS). T760 is subject to Phosphothreonine. Phosphoserine is present on S765. T876 bears the Phosphothreonine mark. Phosphoserine occurs at positions 878, 903, and 908. The disordered stretch occupies residues 967–989 (PLSESENRPSHKAGGPADSARRK).

Interacts with GIPC1/synectin and RHOA. Selectively expressed in cortical and hippocampal neurons with prominent expression in the cell bodies and dendrites. Weakly expressed in rat fad pad ECs (RFPECs).

It is found in the cytoplasm. The protein localises to the perinuclear region. Its subcellular location is the cell membrane. The protein resides in the cell junction. It localises to the cell projection. It is found in the lamellipodium. Its function is as follows. Functions as a guanine exchange factor (GEF) for RAB26 and thus regulates autophagy of synaptic vesicles in axon terminal of motoneurons. Involved in the control of neuronal cell differentiation. Plays a role in angiogenesis through regulation of endothelial cells chemotaxis. Also affects the migration, adhesion, and matrix/bone degradation in macrophages and osteoclasts. The chain is Pleckstrin homology domain-containing family G member 5 (Plekhg5) from Rattus norvegicus (Rat).